Consider the following 1358-residue polypeptide: DNA-directed RNA polymerase subunit beta (1358 aa).

It belongs to the RNA polymerase beta chain family. As to quaternary structure, the RNAP catalytic core consists of 2 alpha, 1 beta, 1 beta' and 1 omega subunit. When a sigma factor is associated with the core the holoenzyme is formed, which can initiate transcription.

The enzyme catalyses RNA(n) + a ribonucleoside 5'-triphosphate = RNA(n+1) + diphosphate. Functionally, DNA-dependent RNA polymerase catalyzes the transcription of DNA into RNA using the four ribonucleoside triphosphates as substrates. The chain is DNA-directed RNA polymerase subunit beta from Francisella tularensis subsp. holarctica (strain LVS).